The following is a 340-amino-acid chain: Ketol-acid reductoisomerase (NADP(+)) (340 aa).

One can recognise a KARI N-terminal Rossmann domain in the interval M1–T182. NADP(+) contacts are provided by residues Y26–Q29, R49, S53, and D83–Q86. H108 is a catalytic residue. G134 contributes to the NADP(+) binding site. The KARI C-terminal knotted domain occupies T183–V328. Mg(2+) is bound by residues D191, E195, E227, and E231. S252 contributes to the substrate binding site.

This sequence belongs to the ketol-acid reductoisomerase family. Requires Mg(2+) as cofactor.

It catalyses the reaction (2R)-2,3-dihydroxy-3-methylbutanoate + NADP(+) = (2S)-2-acetolactate + NADPH + H(+). The enzyme catalyses (2R,3R)-2,3-dihydroxy-3-methylpentanoate + NADP(+) = (S)-2-ethyl-2-hydroxy-3-oxobutanoate + NADPH + H(+). It participates in amino-acid biosynthesis; L-isoleucine biosynthesis; L-isoleucine from 2-oxobutanoate: step 2/4. Its pathway is amino-acid biosynthesis; L-valine biosynthesis; L-valine from pyruvate: step 2/4. In terms of biological role, involved in the biosynthesis of branched-chain amino acids (BCAA). Catalyzes an alkyl-migration followed by a ketol-acid reduction of (S)-2-acetolactate (S2AL) to yield (R)-2,3-dihydroxy-isovalerate. In the isomerase reaction, S2AL is rearranged via a Mg-dependent methyl migration to produce 3-hydroxy-3-methyl-2-ketobutyrate (HMKB). In the reductase reaction, this 2-ketoacid undergoes a metal-dependent reduction by NADPH to yield (R)-2,3-dihydroxy-isovalerate. This is Ketol-acid reductoisomerase (NADP(+)) from Streptococcus suis (strain 98HAH33).